Reading from the N-terminus, the 323-residue chain is Methionyl-tRNA formyltransferase (323 aa).

115–118 contacts (6S)-5,6,7,8-tetrahydrofolate; sequence SLLP.

This sequence belongs to the Fmt family.

It catalyses the reaction L-methionyl-tRNA(fMet) + (6R)-10-formyltetrahydrofolate = N-formyl-L-methionyl-tRNA(fMet) + (6S)-5,6,7,8-tetrahydrofolate + H(+). Attaches a formyl group to the free amino group of methionyl-tRNA(fMet). The formyl group appears to play a dual role in the initiator identity of N-formylmethionyl-tRNA by promoting its recognition by IF2 and preventing the misappropriation of this tRNA by the elongation apparatus. In Blochmanniella floridana, this protein is Methionyl-tRNA formyltransferase.